A 378-amino-acid polypeptide reads, in one-letter code: Chaperone protein DnaJ 2 (378 aa).

Residues 4–68 (DYYAVLGVRR…QKKQVYDLGG (65 aa)) form the J domain. The segment at 130-212 (GTTKDIQVET…CAGDGRVRSR (83 aa)) adopts a CR-type zinc-finger fold. Zn(2+) contacts are provided by Cys-143, Cys-146, Cys-160, Cys-163, Cys-186, Cys-189, Cys-200, and Cys-203. 4 CXXCXGXG motif repeats span residues 143 to 150 (CTTCSGEG), 160 to 167 (CDMCRGRG), 186 to 193 (CPQCQGFG), and 200 to 207 (CPECAGDG). The segment at 351–378 (RGEERPTGQFQPGQQGLFSRLKDAFNGR) is disordered. The span at 358–367 (GQFQPGQQGL) shows a compositional bias: polar residues.

This sequence belongs to the DnaJ family. As to quaternary structure, homodimer. The cofactor is Zn(2+).

Its subcellular location is the cytoplasm. Its function is as follows. Participates actively in the response to hyperosmotic and heat shock by preventing the aggregation of stress-denatured proteins and by disaggregating proteins, also in an autonomous, DnaK-independent fashion. Unfolded proteins bind initially to DnaJ; upon interaction with the DnaJ-bound protein, DnaK hydrolyzes its bound ATP, resulting in the formation of a stable complex. GrpE releases ADP from DnaK; ATP binding to DnaK triggers the release of the substrate protein, thus completing the reaction cycle. Several rounds of ATP-dependent interactions between DnaJ, DnaK and GrpE are required for fully efficient folding. Also involved, together with DnaK and GrpE, in the DNA replication of plasmids through activation of initiation proteins. This Streptomyces avermitilis (strain ATCC 31267 / DSM 46492 / JCM 5070 / NBRC 14893 / NCIMB 12804 / NRRL 8165 / MA-4680) protein is Chaperone protein DnaJ 2.